The chain runs to 70 residues: Envelope small membrane protein (70 aa).

Residue Gly-2 is the site of N-myristoyl glycine; by host attachment. Residues 2 to 15 are endoplasmic reticulum retention signal; the sequence is GSLWSKISQLFVDA. The Virion surface portion of the chain corresponds to 2-25; that stretch reads GSLWSKISQLFVDAFTEFLVSVVD. The chain crosses the membrane as a helical span at residues 26–46; sequence IVIFLAILFGFTVAGWLLVFL. Over 47 to 70 the chain is Intravirion; sequence LRVVCSALLRSRSAIHSPELSKVL.

The protein belongs to the arteriviridae E protein family. As to quaternary structure, homooligomer. Associates with itself into higher-order structures, including dimers, trimers and tetramers. Associates with the GP2b-GP3-GP4 complex. In terms of processing, myristoylated. Not glycosylated.

The protein resides in the virion membrane. Its subcellular location is the host endoplasmic reticulum membrane. It is found in the host Golgi apparatus membrane. The protein localises to the secreted. In terms of biological role, minor envelope protein. May function as a viroporin in the virion envelope that facilitates uncoating of the virus in order to release the genomic RNA into the cytoplasm for subsequent replication. The protein is Envelope small membrane protein (GP2b) of Sus scrofa (Pig).